Here is a 258-residue protein sequence, read N- to C-terminus: Small ribosomal subunit protein mS40 (258 aa).

Residues 1–35 (MAASVLNTVLRRLPMLSLFRGSHRVQVPLQTLCTK) constitute a mitochondrion transit peptide. 2 positions are modified to phosphoserine: S38 and S49. A disordered region spans residues 214 to 258 (SRLRRLYQGHLQEESGPPPESMPKMPPRTPAEASSTGQTGPQSAL). Residues 229–242 (GPPPESMPKMPPRT) show a composition bias toward pro residues. Residues 245–258 (EASSTGQTGPQSAL) are compositionally biased toward polar residues.

It belongs to the bacterial ribosomal protein bS18 family. Mitochondrion-specific ribosomal protein mS40 subfamily. Component of the mitochondrial small ribosomal subunit (mt-SSU). Mature mammalian 55S mitochondrial ribosomes consist of a small (28S) and a large (39S) subunit. The 28S small subunit contains a 12S ribosomal RNA (12S mt-rRNA) and 30 different proteins. The 39S large subunit contains a 16S rRNA (16S mt-rRNA), a copy of mitochondrial valine transfer RNA (mt-tRNA(Val)), which plays an integral structural role, and 52 different proteins. mS40 has a zinc binding site.

Its subcellular location is the mitochondrion. The protein is Small ribosomal subunit protein mS40 (MRPS18B) of Homo sapiens (Human).